Here is a 208-residue protein sequence, read N- to C-terminus: Large ribosomal subunit protein bL17 (208 aa).

Residues 122 to 208 are disordered; it reads TEKKKKKPAK…ASEEAPPKTE (87 aa). The segment covering 151–179 has biased composition (low complexity); sequence ADTPAPAAEESAPAKAAEPEAEAAAPEAE.

It belongs to the bacterial ribosomal protein bL17 family. In terms of assembly, part of the 50S ribosomal subunit. Contacts protein L32.

The chain is Large ribosomal subunit protein bL17 from Desulfosudis oleivorans (strain DSM 6200 / JCM 39069 / Hxd3) (Desulfococcus oleovorans).